Here is a 146-residue protein sequence, read N- to C-terminus: MRALIQRVKEAKVIVDDVITGEIRQGLLVFLGLGRDDQLENGKKLIDKILKYRVFDDENGKMGWNLSQAQGGLLLVSQFTLMAQTQKGLRPDFGPAMPPQQAKVLYDQLVEYAQSQFDHVETGIFAADMQVHLINDGPVTFQLEIL.

Positions 137–138 (GP) match the Gly-cisPro motif, important for rejection of L-amino acids motif.

It belongs to the DTD family. As to quaternary structure, homodimer.

The protein localises to the cytoplasm. The enzyme catalyses glycyl-tRNA(Ala) + H2O = tRNA(Ala) + glycine + H(+). It catalyses the reaction a D-aminoacyl-tRNA + H2O = a tRNA + a D-alpha-amino acid + H(+). An aminoacyl-tRNA editing enzyme that deacylates mischarged D-aminoacyl-tRNAs. Also deacylates mischarged glycyl-tRNA(Ala), protecting cells against glycine mischarging by AlaRS. Acts via tRNA-based rather than protein-based catalysis; rejects L-amino acids rather than detecting D-amino acids in the active site. By recycling D-aminoacyl-tRNA to D-amino acids and free tRNA molecules, this enzyme counteracts the toxicity associated with the formation of D-aminoacyl-tRNA entities in vivo and helps enforce protein L-homochirality. The sequence is that of D-aminoacyl-tRNA deacylase from Acinetobacter baylyi (strain ATCC 33305 / BD413 / ADP1).